Reading from the N-terminus, the 114-residue chain is Iron-sulfur cluster insertion protein ErpA (114 aa).

3 residues coordinate iron-sulfur cluster: cysteine 42, cysteine 106, and cysteine 108.

The protein belongs to the HesB/IscA family. In terms of assembly, homodimer. Iron-sulfur cluster serves as cofactor.

Its function is as follows. Required for insertion of 4Fe-4S clusters for at least IspG. The sequence is that of Iron-sulfur cluster insertion protein ErpA from Erwinia tasmaniensis (strain DSM 17950 / CFBP 7177 / CIP 109463 / NCPPB 4357 / Et1/99).